A 142-amino-acid polypeptide reads, in one-letter code: Thioredoxin-like protein YLS8 (142 aa).

This sequence belongs to the DIM1 family. In terms of tissue distribution, expressed in roots, leaves, stems, cauline leaves and flowers.

The protein is Thioredoxin-like protein YLS8 (YLS8) of Arabidopsis thaliana (Mouse-ear cress).